The chain runs to 252 residues: Aspartate/glutamate leucyltransferase (252 aa).

The protein belongs to the R-transferase family. Bpt subfamily.

It localises to the cytoplasm. It carries out the reaction N-terminal L-glutamyl-[protein] + L-leucyl-tRNA(Leu) = N-terminal L-leucyl-L-glutamyl-[protein] + tRNA(Leu) + H(+). The enzyme catalyses N-terminal L-aspartyl-[protein] + L-leucyl-tRNA(Leu) = N-terminal L-leucyl-L-aspartyl-[protein] + tRNA(Leu) + H(+). In terms of biological role, functions in the N-end rule pathway of protein degradation where it conjugates Leu from its aminoacyl-tRNA to the N-termini of proteins containing an N-terminal aspartate or glutamate. This is Aspartate/glutamate leucyltransferase from Afipia carboxidovorans (strain ATCC 49405 / DSM 1227 / KCTC 32145 / OM5) (Oligotropha carboxidovorans).